We begin with the raw amino-acid sequence, 141 residues long: Galactose-6-phosphate isomerase subunit LacA 1 (141 aa).

Belongs to the LacAB/RpiB family. Heteromultimeric protein consisting of LacA and LacB.

It catalyses the reaction aldehydo-D-galactose 6-phosphate = keto-D-tagatose 6-phosphate. Its pathway is carbohydrate metabolism; D-galactose 6-phosphate degradation; D-tagatose 6-phosphate from D-galactose 6-phosphate: step 1/1. This chain is Galactose-6-phosphate isomerase subunit LacA 1, found in Streptococcus pyogenes serotype M18 (strain MGAS8232).